The primary structure comprises 308 residues: Aspartate carbamoyltransferase catalytic subunit (308 aa).

Residues arginine 59 and threonine 60 each coordinate carbamoyl phosphate. Residue lysine 87 participates in L-aspartate binding. Carbamoyl phosphate-binding residues include arginine 109, histidine 137, and glutamine 140. The L-aspartate site is built by arginine 170 and arginine 224. Glycine 265 and proline 266 together coordinate carbamoyl phosphate.

Belongs to the aspartate/ornithine carbamoyltransferase superfamily. ATCase family. In terms of assembly, heterododecamer (2C3:3R2) of six catalytic PyrB chains organized as two trimers (C3), and six regulatory PyrI chains organized as three dimers (R2).

The enzyme catalyses carbamoyl phosphate + L-aspartate = N-carbamoyl-L-aspartate + phosphate + H(+). It functions in the pathway pyrimidine metabolism; UMP biosynthesis via de novo pathway; (S)-dihydroorotate from bicarbonate: step 2/3. Its function is as follows. Catalyzes the condensation of carbamoyl phosphate and aspartate to form carbamoyl aspartate and inorganic phosphate, the committed step in the de novo pyrimidine nucleotide biosynthesis pathway. The protein is Aspartate carbamoyltransferase catalytic subunit of Flavobacterium johnsoniae (strain ATCC 17061 / DSM 2064 / JCM 8514 / BCRC 14874 / CCUG 350202 / NBRC 14942 / NCIMB 11054 / UW101) (Cytophaga johnsonae).